Consider the following 150-residue polypeptide: Cytochrome c oxidase subunit 5A, mitochondrial (150 aa).

A mitochondrion-targeting transit peptide spans 1–41; sequence MLGAALRRCAVAATTRAGPRGLLHSARTPGPAAAIQSVRCX. An SIFI-degron motif is present at residues 2-17; that stretch reads LGAALRRCAVAATTRA. N6-acetyllysine occurs at positions 87 and 113. Position 141 is a phosphothreonine (Thr141).

Belongs to the cytochrome c oxidase subunit 5A family. In terms of assembly, component of the cytochrome c oxidase (complex IV, CIV), a multisubunit enzyme composed of 14 subunits. The complex is composed of a catalytic core of 3 subunits MT-CO1, MT-CO2 and MT-CO3, encoded in the mitochondrial DNA, and 11 supernumerary subunits COX4I, COX5A, COX5B, COX6A, COX6B, COX6C, COX7A, COX7B, COX7C, COX8 and NDUFA4, which are encoded in the nuclear genome. The complex exists as a monomer or a dimer and forms supercomplexes (SCs) in the inner mitochondrial membrane with NADH-ubiquinone oxidoreductase (complex I, CI) and ubiquinol-cytochrome c oxidoreductase (cytochrome b-c1 complex, complex III, CIII), resulting in different assemblies (supercomplex SCI(1)III(2)IV(1) and megacomplex MCI(2)III(2)IV(2)). Interacts with AFG1L. Interacts with RAB5IF. In terms of processing, in response to mitochondrial stress, the precursor protein is ubiquitinated by the SIFI complex in the cytoplasm before mitochondrial import, leading to its degradation. Within the SIFI complex, UBR4 initiates ubiquitin chain that are further elongated or branched by KCMF1.

It is found in the mitochondrion inner membrane. It functions in the pathway energy metabolism; oxidative phosphorylation. In terms of biological role, component of the cytochrome c oxidase, the last enzyme in the mitochondrial electron transport chain which drives oxidative phosphorylation. The respiratory chain contains 3 multisubunit complexes succinate dehydrogenase (complex II, CII), ubiquinol-cytochrome c oxidoreductase (cytochrome b-c1 complex, complex III, CIII) and cytochrome c oxidase (complex IV, CIV), that cooperate to transfer electrons derived from NADH and succinate to molecular oxygen, creating an electrochemical gradient over the inner membrane that drives transmembrane transport and the ATP synthase. Cytochrome c oxidase is the component of the respiratory chain that catalyzes the reduction of oxygen to water. Electrons originating from reduced cytochrome c in the intermembrane space (IMS) are transferred via the dinuclear copper A center (CU(A)) of subunit 2 and heme A of subunit 1 to the active site in subunit 1, a binuclear center (BNC) formed by heme A3 and copper B (CU(B)). The BNC reduces molecular oxygen to 2 water molecules using 4 electrons from cytochrome c in the IMS and 4 protons from the mitochondrial matrix. This chain is Cytochrome c oxidase subunit 5A, mitochondrial (COX5A), found in Pan paniscus (Pygmy chimpanzee).